We begin with the raw amino-acid sequence, 405 residues long: Scarecrow-like protein 23 (405 aa).

Positions 1-20 (MTTKRIDRDLPSSDDPSSAK) are disordered. The 370-residue stretch at 31–400 (ENDGAAAIKL…LSLLTASAWK (370 aa)) folds into the GRAS domain. A leucine repeat I (LRI) region spans residues 38–102 (IKLLSLLLQC…ISSYLSGACS (65 aa)). Residues 45 to 49 (LQCAE) carry the LxCxE motif motif. Residues 121–186 (LQTYNSVSPL…RKLRSIRITG (66 aa)) form a VHIID region. The short motif at 152–156 (VHIID) is the VHIID element. The segment at 196 to 228 (STGRRLADFASSLNLPFEFHPIEGIIGNLIDPS) is leucine repeat II (LRII). The tract at residues 238–327 (VVVHWMQHRL…QIVLGTEIRN (90 aa)) is PFYRE. The SAW stretch occupies residues 330–400 (AHGGGRRKRM…LSLLTASAWK (71 aa)).

The protein belongs to the GRAS family. Interacts with SHR. Expressed in seedlings, cotyledons, shoot apex, leaves and flowers.

It localises to the nucleus. Its function is as follows. Probable transcription factor involved in plant development. This Arabidopsis thaliana (Mouse-ear cress) protein is Scarecrow-like protein 23 (SCL23).